A 281-amino-acid chain; its full sequence is Probable replication-associated protein repA1 (281 aa).

Belongs to the IncFII RepA family.

Functionally, this protein is essential for plasmid replication; it is involved in copy control functions. This chain is Probable replication-associated protein repA1 (repA1), found in Buchnera aphidicola subsp. Cinara cedri (strain Cc).